The sequence spans 1850 residues: Serine/threonine-protein kinase WNK (1850 aa).

Disordered stretches follow at residues Met1–Glu108, Gln221–Lys253, and Met272–Ala309. Low complexity-rich tracts occupy residues Ser16–Thr26 and Pro234–Asn251. The segment covering Asp284–Ala309 has biased composition (basic and acidic residues). A Protein kinase domain is found at Leu334–Phe596. ATP contacts are provided by residues Ser344, Thr416 to Met419, and Lys466. The active-site Proton acceptor is Asp483. Residues Asp693–Asn749 adopt a coiled-coil conformation. Residues Glu727–Ala742 show a composition bias toward basic and acidic residues. 7 disordered regions span residues Glu727–Pro790, Thr890–Ser943, Glu1040–Pro1130, Ser1188–Ile1249, Gly1588–Ser1636, Ala1721–Gly1740, and Ile1769–Val1850. Pro residues predominate over residues Asn751 to Ala760. Residues Ser776–Pro790 show a composition bias toward polar residues. Residues Thr890–Thr934 show a composition bias toward low complexity. Residues Pro1062 to Pro1071 show a composition bias toward basic and acidic residues. Polar residues predominate over residues Gln1077–Ser1101. The segment covering Ser1188–Asn1207 has biased composition (low complexity). Polar residues predominate over residues Met1208–Val1217. Over residues Pro1771–Ser1805 the composition is skewed to low complexity. Residues Tyr1806 to Ala1820 show a composition bias toward polar residues. Residues Ser1821–Ser1832 show a composition bias toward low complexity.

This sequence belongs to the protein kinase superfamily. Ser/Thr protein kinase family. WNK subfamily. As to quaternary structure, interacts with gck-3 (via C-terminus). Mg(2+) serves as cofactor. In terms of tissue distribution, expressed in pharynx, nervous system, hypodermis, spermatheca, excretory cell and canal and body wall muscles.

It localises to the cytoplasm. The enzyme catalyses L-seryl-[protein] + ATP = O-phospho-L-seryl-[protein] + ADP + H(+). The catalysed reaction is L-threonyl-[protein] + ATP = O-phospho-L-threonyl-[protein] + ADP + H(+). Its activity is regulated as follows. Activated in response to hyperosmotic stress: cell shrinkage promotes formation of a membraneless compartment that concentrates wnk-1 with its downstrem substrates. Functionally, serine/threonine-protein kinase component of the WNK3-SPAK/OSR1 kinase cascade, which plays an important role in the regulation of electrolyte homeostasis and regulatory volume increase in response to hyperosmotic stress. Wnk-1 mediates regulatory volume increase in response to hyperosmotic stress by acting as a molecular crowding sensor, which senses cell shrinkage and mediates formation of a membraneless compartment by undergoing liquid-liquid phase separation. The membraneless compartment concentrates wnk-1 with its substrates. Phosphorylates gck-3. Plays a role in osmotic stress responses during which it increases gpdh-1 translation, likely by phosphorylating gck-3. Essential for larval development and the tubular formation of the excretory canals. The sequence is that of Serine/threonine-protein kinase WNK from Caenorhabditis elegans.